A 441-amino-acid polypeptide reads, in one-letter code: MEISSHQSHLLEQLNEQRRQDVFCDCSILVEGKVFKAHRNVLFASSGYFKMLLSQNSKETSQPTTATFQTFSPDTFTVILDFVYSGKLSLTGQNVIEVMSAASFLQMTDVISVCKTFIKSSLDISEKEKDRYFSLSDKDTGSNGVERPSVYSSSWQEDGGSPRSHLSPDQGPAIVSGKPWNKYSYHPASQRSPQPPLAKHEQRKDPIKKTKHLRLPQPSEVVHFKSGKGDARTSDSGHHVSQSEEQVQVDAEVDPVSAGYPYSQGPEVASRSFPDNLPRLRFKCPYCTHVVKRKADLKRHLRCHTGERPYPCQACGKRFSRLDHLSSHFRTIHQACKLICRKCKRHVTDLTGQVVQEGTRRYRLCNECLTEVGMDSLPADLETEQHRVSPADGDKDCRWHLSEEENRSYVEIVEDGSADLVIQQVDDSEEEEEKEIKPNIR.

One can recognise a BTB domain in the interval 24 to 92; it reads CDCSILVEGK…VYSGKLSLTG (69 aa). Residues 135–248 form a disordered region; that stretch reads LSDKDTGSNG…HVSQSEEQVQ (114 aa). Phosphoserine is present on residues S161 and S167. Residues K178, K182, and K199 each participate in a glycyl lysine isopeptide (Lys-Gly) (interchain with G-Cter in SUMO2) cross-link. Basic and acidic residues-rich tracts occupy residues 198–208 and 227–242; these read AKHEQRKDPIK and GKGD…HVSQ. 2 consecutive C2H2-type zinc fingers follow at residues 282 to 304 and 310 to 333; these read FKCP…LRCH and YPCQ…RTIH. A Glycyl lysine isopeptide (Lys-Gly) (interchain with G-Cter in SUMO2) cross-link involves residue K437.

It localises to the nucleus. In terms of biological role, may be involved in transcriptional regulation. This is Zinc finger and BTB domain-containing protein 8A (Zbtb8a) from Rattus norvegicus (Rat).